The following is a 356-amino-acid chain: MTERRIIHIDMDYFFAQVEMRDNPKLKGKPVIVGGKASSRGVVSTASYEARKYGVHSAMPMSQAHKLCPNGYFVTSNFGAYRETSAQIMSIFRSYTDKVEPMSLDEAYLDITELVRPDLPASKIAQYIRKDILEQTHLTASAGVSYNKFLAKLASGMNKPDGLTVIDYQNVHDILMTLDIGDFPGVGKASKKVMHDNGIFNGRDLYEKTEFELIRLFGKRGRGLYNKARGIDHSEVKSSRVRKSVGTERTFATDVNDDEEILRKVWELSGKTAERLNKLQKSAKTVTVKIKTYQFETLSKQMSLRDSVSSEEDIYNIAYLLYNDLKDPDVPIRLIGVTVGNLEQSTYKNMTIYDFI.

One can recognise a UmuC domain in the interval 6–187; that stretch reads IIHIDMDYFF…LDIGDFPGVG (182 aa). Residues aspartate 10 and aspartate 105 each coordinate Mg(2+). Glutamate 106 is an active-site residue.

The protein belongs to the DNA polymerase type-Y family. As to quaternary structure, monomer. Mg(2+) serves as cofactor.

It localises to the cytoplasm. It carries out the reaction DNA(n) + a 2'-deoxyribonucleoside 5'-triphosphate = DNA(n+1) + diphosphate. Poorly processive, error-prone DNA polymerase involved in untargeted mutagenesis. Copies undamaged DNA at stalled replication forks, which arise in vivo from mismatched or misaligned primer ends. These misaligned primers can be extended by PolIV. Exhibits no 3'-5' exonuclease (proofreading) activity. May be involved in translesional synthesis, in conjunction with the beta clamp from PolIII. The chain is DNA polymerase IV from Staphylococcus aureus (strain Mu50 / ATCC 700699).